The sequence spans 660 residues: DNA ligase (660 aa).

Residues 33–37 (DFVYD), 82–83 (SL), and Glu-110 each bind NAD(+). Lys-112 acts as the N6-AMP-lysine intermediate in catalysis. The NAD(+) site is built by Arg-133, Glu-167, Lys-281, and Lys-305. Zn(2+) is bound by residues Cys-396, Cys-399, Cys-412, and Cys-417. The 78-residue stretch at 583-660 (GENKLLAGKK…SFEDIKSYLD (78 aa)) folds into the BRCT domain.

The protein belongs to the NAD-dependent DNA ligase family. LigA subfamily. It depends on Mg(2+) as a cofactor. Mn(2+) is required as a cofactor.

The enzyme catalyses NAD(+) + (deoxyribonucleotide)n-3'-hydroxyl + 5'-phospho-(deoxyribonucleotide)m = (deoxyribonucleotide)n+m + AMP + beta-nicotinamide D-nucleotide.. DNA ligase that catalyzes the formation of phosphodiester linkages between 5'-phosphoryl and 3'-hydroxyl groups in double-stranded DNA using NAD as a coenzyme and as the energy source for the reaction. It is essential for DNA replication and repair of damaged DNA. This chain is DNA ligase, found in Borreliella burgdorferi (strain ATCC 35210 / DSM 4680 / CIP 102532 / B31) (Borrelia burgdorferi).